The primary structure comprises 290 residues: 4-hydroxybenzoate octaprenyltransferase (290 aa).

Transmembrane regions (helical) follow at residues 23-43 (IGTE…SDGY), 46-66 (LKMF…GCAI), 96-116 (AIWV…FLPI), 118-138 (TFYW…MKRY), 141-161 (LPQV…YTAT), 169-189 (CWLL…QYAI), 212-232 (IPII…ALYI), 235-255 (LLFP…IYQW), and 265-285 (LCFW…LAIL).

It belongs to the UbiA prenyltransferase family. The cofactor is Mg(2+).

The protein resides in the cell inner membrane. The enzyme catalyses all-trans-octaprenyl diphosphate + 4-hydroxybenzoate = 4-hydroxy-3-(all-trans-octaprenyl)benzoate + diphosphate. The protein operates within cofactor biosynthesis; ubiquinone biosynthesis. Functionally, catalyzes the prenylation of para-hydroxybenzoate (PHB) with an all-trans polyprenyl group. Mediates the second step in the final reaction sequence of ubiquinone-8 (UQ-8) biosynthesis, which is the condensation of the polyisoprenoid side chain with PHB, generating the first membrane-bound Q intermediate 3-octaprenyl-4-hydroxybenzoate. This is 4-hydroxybenzoate octaprenyltransferase from Acinetobacter baylyi (strain ATCC 33305 / BD413 / ADP1).